A 538-amino-acid polypeptide reads, in one-letter code: CTP synthase (538 aa).

Positions 1 to 266 (MRTKYIFITG…DQKIVDLLNI (266 aa)) are amidoligase domain. A CTP-binding site is contributed by Ser-14. Ser-14 is a UTP binding site. Residues 15–20 (SLGKGL) and Asp-72 each bind ATP. Positions 72 and 140 each coordinate Mg(2+). Residues 147-149 (DIE), 187-192 (KTKPTQ), and Lys-223 each bind CTP. Residues 187-192 (KTKPTQ) and Lys-223 each bind UTP. Residue 239–241 (KDV) coordinates ATP. In terms of domain architecture, Glutamine amidotransferase type-1 spans 291–533 (NIAIVGKYVN…IEAALRYRKK (243 aa)). Residue Gly-353 coordinates L-glutamine. Cys-380 serves as the catalytic Nucleophile; for glutamine hydrolysis. L-glutamine-binding positions include 381 to 384 (LGMQ), Glu-404, and Arg-461. Active-site residues include His-506 and Glu-508.

It belongs to the CTP synthase family. In terms of assembly, homotetramer.

The catalysed reaction is UTP + L-glutamine + ATP + H2O = CTP + L-glutamate + ADP + phosphate + 2 H(+). The enzyme catalyses L-glutamine + H2O = L-glutamate + NH4(+). It catalyses the reaction UTP + NH4(+) + ATP = CTP + ADP + phosphate + 2 H(+). Its pathway is pyrimidine metabolism; CTP biosynthesis via de novo pathway; CTP from UDP: step 2/2. Its activity is regulated as follows. Allosterically activated by GTP, when glutamine is the substrate; GTP has no effect on the reaction when ammonia is the substrate. The allosteric effector GTP functions by stabilizing the protein conformation that binds the tetrahedral intermediate(s) formed during glutamine hydrolysis. Inhibited by the product CTP, via allosteric rather than competitive inhibition. Catalyzes the ATP-dependent amination of UTP to CTP with either L-glutamine or ammonia as the source of nitrogen. Regulates intracellular CTP levels through interactions with the four ribonucleotide triphosphates. This is CTP synthase from Syntrophus aciditrophicus (strain SB).